Reading from the N-terminus, the 292-residue chain is Putative rRNA 2'-O-methyltransferase fibrillarin 3 (292 aa).

The tract at residues 1–58 (MKPPQRGRGGGVRGGRGLARGGEGSAVRGSGRGGESGRGRGPGRVKSESDGGIKGGSK) is disordered. Over residues 7-42 (GRGGGVRGGRGLARGGEGSAVRGSGRGGESGRGRGP) the composition is skewed to gly residues. Residues 146-147 (YT), 165-166 (EH), 190-191 (DA), and 210-213 (DVNH) contribute to the S-adenosyl-L-methionine site.

This sequence belongs to the methyltransferase superfamily. Fibrillarin family. As to quaternary structure, component of box C/D small nucleolar ribonucleoprotein (snoRNP) particles. As to expression, not detectable by RT-PCR.

The protein localises to the nucleus. The protein resides in the nucleolus. It carries out the reaction L-glutaminyl-[histone H2A] + S-adenosyl-L-methionine = N(5)-methyl-L-glutaminyl-[histone H2A] + S-adenosyl-L-homocysteine + H(+). Its function is as follows. S-adenosyl-L-methionine-dependent methyltransferase that has the ability to methylate both RNAs and proteins. Involved in pre-rRNA processing. Utilizes the methyl donor S-adenosyl-L-methionine to catalyze the site-specific 2'-hydroxyl methylation of ribose moieties in pre-ribosomal RNA. Site specificity is provided by a guide RNA that base pairs with the substrate. Methylation occurs at a characteristic distance from the sequence involved in base pairing with the guide RNA. Also acts as a protein methyltransferase by mediating methylation of 'Gln-105' of histone H2A (H2AQ105me), a modification that impairs binding of the FACT complex and is specifically present at 35S ribosomal DNA locus. In Arabidopsis thaliana (Mouse-ear cress), this protein is Putative rRNA 2'-O-methyltransferase fibrillarin 3 (FIB3).